The sequence spans 161 residues: Short form salivary protein D7S (161 aa).

A signal peptide spans 1 to 18 (MKFPSILLAILLFKPITA). 3 disulfide bridges follow: C33–C67, C47–C155, and C109–C125.

The protein belongs to the PBP/GOBP family.

It localises to the secreted. In terms of biological role, in contrast to the related D7 salivary proteins, does not bind serotonin. The chain is Short form salivary protein D7S from Culex quinquefasciatus (Southern house mosquito).